Consider the following 94-residue polypeptide: Putative pterin-4-alpha-carbinolamine dehydratase (94 aa).

Belongs to the pterin-4-alpha-carbinolamine dehydratase family.

It catalyses the reaction (4aS,6R)-4a-hydroxy-L-erythro-5,6,7,8-tetrahydrobiopterin = (6R)-L-erythro-6,7-dihydrobiopterin + H2O. This Caulobacter vibrioides (strain ATCC 19089 / CIP 103742 / CB 15) (Caulobacter crescentus) protein is Putative pterin-4-alpha-carbinolamine dehydratase.